The primary structure comprises 325 residues: Methionyl-tRNA formyltransferase (325 aa).

111–114 contacts (6S)-5,6,7,8-tetrahydrofolate; it reads SILP.

It belongs to the Fmt family.

The catalysed reaction is L-methionyl-tRNA(fMet) + (6R)-10-formyltetrahydrofolate = N-formyl-L-methionyl-tRNA(fMet) + (6S)-5,6,7,8-tetrahydrofolate + H(+). Functionally, attaches a formyl group to the free amino group of methionyl-tRNA(fMet). The formyl group appears to play a dual role in the initiator identity of N-formylmethionyl-tRNA by promoting its recognition by IF2 and preventing the misappropriation of this tRNA by the elongation apparatus. This Microcystis aeruginosa (strain NIES-843 / IAM M-2473) protein is Methionyl-tRNA formyltransferase.